We begin with the raw amino-acid sequence, 221 residues long: Late embryogenesis abundant protein, group 3 (221 aa).

The segment at 1 to 221 (MASHQDKASY…KDSSTITRDH (221 aa)) is disordered. Basic and acidic residues predominate over residues 33–42 (TAQHAKDRAA). The segment covering 43–52 (DAAGHAAGKG) has biased composition (low complexity). Basic and acidic residues-rich tracts occupy residues 53–63 (QDAKEATKQKA) and 72–147 (KKTD…KQKA). Residues 212–221 (KDSSTITRDH) are compositionally biased toward polar residues.

This sequence belongs to the LEA type 4 family.

This chain is Late embryogenesis abundant protein, group 3 (MGL3), found in Zea mays (Maize).